The chain runs to 232 residues: MRLPPLTKMQFVHRPNRFVVELKRTDTEENVLAHLPDPGRLRELLVEGAIIWAEPAVDPLRKTAWTAVLCETPGGDLVSLKTTFANQLVEEALASQSLEAFSGWQLEKREATIGQSRFDFLLSKNGRTLVLEVKSVTLARGSKGFFPDAVTKRGAKHVRELTALNLLPEYESAVLFVSQHSNISTVEMESSIDADFAKAIKEANDKGVFISAVSTELSKQNICLKNRIPVVV.

Belongs to the SfsA family.

The protein is Sugar fermentation stimulation protein homolog of Shouchella clausii (strain KSM-K16) (Alkalihalobacillus clausii).